Consider the following 37-residue polypeptide: Esculentin-2P (37 aa).

Residues Cys31 and Cys37 are joined by a disulfide bond.

As to expression, expressed by the skin glands.

Its subcellular location is the secreted. Functionally, antibacterial activity against Gram-negative bacterium E.coli. The polypeptide is Esculentin-2P (Lithobates pipiens (Northern leopard frog)).